A 230-amino-acid polypeptide reads, in one-letter code: MSAVSTQKDTEKKANLVLPVKEAGGKSNGTVELPAEIFDVTANIALMHQVVTAQLAAARQGTHATKTRGEVSGGGKKPYRQKGTGRARQGSTRAPQFTGGGTVHGPQPRDYSQRTPKKMIRAALHGALSDRARNDRIHVVSELVAGQTPSTKTAKNFLAELSDRKKFLVVVGREDVTAWKSVANLQNVQPIAPDQLNTYDVLNSDDVVFSVEALNAFVHGPTEAAQEESK.

The disordered stretch occupies residues 59-113 (RQGTHATKTRGEVSGGGKKPYRQKGTGRARQGSTRAPQFTGGGTVHGPQPRDYSQ).

Belongs to the universal ribosomal protein uL4 family. In terms of assembly, part of the 50S ribosomal subunit.

In terms of biological role, one of the primary rRNA binding proteins, this protein initially binds near the 5'-end of the 23S rRNA. It is important during the early stages of 50S assembly. It makes multiple contacts with different domains of the 23S rRNA in the assembled 50S subunit and ribosome. Forms part of the polypeptide exit tunnel. This is Large ribosomal subunit protein uL4 from Nocardia farcinica (strain IFM 10152).